The chain runs to 703 residues: Polyribonucleotide nucleotidyltransferase (703 aa).

2 residues coordinate Mg(2+): Asp-486 and Asp-492. Residues Pro-554 to Ile-613 form the KH domain. Residues Gly-623–Lys-691 form the S1 motif domain.

It belongs to the polyribonucleotide nucleotidyltransferase family. It depends on Mg(2+) as a cofactor.

It localises to the cytoplasm. The catalysed reaction is RNA(n+1) + phosphate = RNA(n) + a ribonucleoside 5'-diphosphate. Functionally, involved in mRNA degradation. Catalyzes the phosphorolysis of single-stranded polyribonucleotides processively in the 3'- to 5'-direction. The sequence is that of Polyribonucleotide nucleotidyltransferase from Ruminiclostridium cellulolyticum (strain ATCC 35319 / DSM 5812 / JCM 6584 / H10) (Clostridium cellulolyticum).